A 118-amino-acid chain; its full sequence is Large ribosomal subunit protein uL18 (118 aa).

This sequence belongs to the universal ribosomal protein uL18 family. In terms of assembly, part of the 50S ribosomal subunit; part of the 5S rRNA/L5/L18/L25 subcomplex. Contacts the 5S and 23S rRNAs.

This is one of the proteins that bind and probably mediate the attachment of the 5S RNA into the large ribosomal subunit, where it forms part of the central protuberance. The chain is Large ribosomal subunit protein uL18 from Ligilactobacillus salivarius (strain UCC118) (Lactobacillus salivarius).